A 157-amino-acid chain; its full sequence is Transcriptional repressor NrdR (157 aa).

The segment at 3-34 is a zinc-finger region; that stretch reads CSNCQNKNTKVLDSRPIEEGRAIRRRRECERC. The region spanning 49–139 is the ATP-cone domain; that stretch reads LIVVKKDGVR…VYRQFKDITV (91 aa).

Belongs to the NrdR family. It depends on Zn(2+) as a cofactor.

Functionally, negatively regulates transcription of bacterial ribonucleotide reductase nrd genes and operons by binding to NrdR-boxes. This is Transcriptional repressor NrdR from Oceanobacillus iheyensis (strain DSM 14371 / CIP 107618 / JCM 11309 / KCTC 3954 / HTE831).